A 755-amino-acid polypeptide reads, in one-letter code: 3-isopropylmalate dehydratase (755 aa).

The [4Fe-4S] cluster site is built by C353, C413, and C416. Disordered stretches follow at residues 427 to 446 (GERC…GAGG), 471 to 493 (LTPA…ELEP), and 510 to 529 (DAPA…AAGM). Low complexity predominate over residues 510 to 528 (DAPATGASPPSPAPSDAAG).

This sequence belongs to the aconitase/IPM isomerase family. As to quaternary structure, monomer. [4Fe-4S] cluster is required as a cofactor.

It carries out the reaction (2R,3S)-3-isopropylmalate = (2S)-2-isopropylmalate. The protein operates within amino-acid biosynthesis; L-leucine biosynthesis; L-leucine from 3-methyl-2-oxobutanoate: step 2/4. Catalyzes the isomerization between 2-isopropylmalate and 3-isopropylmalate, via the formation of 2-isopropylmaleate. This is 3-isopropylmalate dehydratase (LEUA) from Rhizomucor pusillus.